Reading from the N-terminus, the 389-residue chain is D-alanine--D-alanine ligase (389 aa).

A compositionally biased stretch (polar residues) spans 1–12 (MSTENLPQNPEQ). The disordered stretch occupies residues 1–22 (MSTENLPQNPEQSPRRPPRKPR). Positions 169 to 379 (KAVFTSYGLK…YPELVDRLVQ (211 aa)) constitute an ATP-grasp domain. Position 205 to 260 (205 to 260 (AGEHGWPLFVKPARAGSSIGITKVDDLAGLDEAIEEARRHDPKILVEAALRGREIE)) interacts with ATP. Mg(2+) contacts are provided by Asp333, Glu346, and Asn348.

The protein belongs to the D-alanine--D-alanine ligase family. Mg(2+) serves as cofactor. It depends on Mn(2+) as a cofactor.

It is found in the cytoplasm. The enzyme catalyses 2 D-alanine + ATP = D-alanyl-D-alanine + ADP + phosphate + H(+). The protein operates within cell wall biogenesis; peptidoglycan biosynthesis. In terms of biological role, cell wall formation. This chain is D-alanine--D-alanine ligase (ddl), found in Streptomyces coelicolor (strain ATCC BAA-471 / A3(2) / M145).